We begin with the raw amino-acid sequence, 100 residues long: Urease subunit gamma (100 aa).

The protein belongs to the urease gamma subunit family. In terms of assembly, heterotrimer of UreA (gamma), UreB (beta) and UreC (alpha) subunits. Three heterotrimers associate to form the active enzyme.

The protein resides in the cytoplasm. The enzyme catalyses urea + 2 H2O + H(+) = hydrogencarbonate + 2 NH4(+). It functions in the pathway nitrogen metabolism; urea degradation; CO(2) and NH(3) from urea (urease route): step 1/1. This Prochlorococcus marinus (strain MIT 9303) protein is Urease subunit gamma.